Here is a 424-residue protein sequence, read N- to C-terminus: Tyrosine--tRNA ligase (424 aa).

Residue Tyr37 coordinates L-tyrosine. The 'HIGH' region motif lies at 42-51; it reads PTADSLHLGH. L-tyrosine-binding residues include Tyr175 and Gln179. The short motif at 235-239 is the 'KMSKS' region element; sequence KFGKT. Lys238 serves as a coordination point for ATP. The 58-residue stretch at 357-414 folds into the S4 RNA-binding domain; it reads ADLQQALVNAELVPSRGQARTMIGSNAVTINGEKQSNAEYNFSDADRLFGRYTLLRRG.

It belongs to the class-I aminoacyl-tRNA synthetase family. TyrS type 1 subfamily. In terms of assembly, homodimer.

The protein localises to the cytoplasm. The enzyme catalyses tRNA(Tyr) + L-tyrosine + ATP = L-tyrosyl-tRNA(Tyr) + AMP + diphosphate + H(+). Its function is as follows. Catalyzes the attachment of tyrosine to tRNA(Tyr) in a two-step reaction: tyrosine is first activated by ATP to form Tyr-AMP and then transferred to the acceptor end of tRNA(Tyr). The sequence is that of Tyrosine--tRNA ligase from Serratia proteamaculans (strain 568).